A 621-amino-acid chain; its full sequence is Hemolysin ahh1 (621 aa).

The signal sequence occupies residues methionine 1–alanine 30. The region spanning arginine 491–serine 610 is the Ricin B-type lectin domain.

This sequence belongs to the HlyA hemolysin family.

Functionally, bacterial hemolysins are exotoxins that attack blood cell membranes and cause cell rupture by mechanisms not clearly defined. This chain is Hemolysin ahh1 (ahh1), found in Aeromonas hydrophila subsp. hydrophila (strain ATCC 7966 / DSM 30187 / BCRC 13018 / CCUG 14551 / JCM 1027 / KCTC 2358 / NCIMB 9240 / NCTC 8049).